Consider the following 457-residue polypeptide: Multidrug resistance protein MdtK (457 aa).

A run of 12 helical transmembrane segments spans residues leucine 11–valine 31, isoleucine 53–alanine 73, tryptophan 93–isoleucine 113, alanine 127–leucine 147, glycine 160–tyrosine 180, leucine 188–methionine 208, leucine 243–isoleucine 263, phenylalanine 280–glycine 300, tyrosine 316–leucine 336, leucine 357–valine 377, isoleucine 387–glycine 407, and proline 418–alanine 438.

This sequence belongs to the multi antimicrobial extrusion (MATE) (TC 2.A.66.1) family. MdtK subfamily.

It localises to the cell inner membrane. Its function is as follows. Multidrug efflux pump that functions probably as a Na(+)/drug antiporter. The polypeptide is Multidrug resistance protein MdtK (Photorhabdus laumondii subsp. laumondii (strain DSM 15139 / CIP 105565 / TT01) (Photorhabdus luminescens subsp. laumondii)).